The sequence spans 601 residues: Glutathione-regulated potassium-efflux system protein KefB (601 aa).

A run of 13 helical transmembrane segments spans residues 4–24, 29–49, 55–75, 87–107, 115–135, 152–172, 177–197, 207–227, 230–250, 268–288, 291–311, 324–344, and 356–376; these read SDFL…VPLA, IGAV…GLGF, EILH…GLEL, IFGV…GLLM, AAVV…LQLM, VLLF…LLAG, HFDW…LIGG, FIAA…LVLG, LFMD…GVLL, GLLL…GVLY, LLWV…VLYL, MQFA…FSTA, and ALLL…MKLV. Residues 400 to 519 form the RCK N-terminal domain; it reads KPQVIVVGFG…AGVTQFSRET (120 aa).

This sequence belongs to the monovalent cation:proton antiporter 2 (CPA2) transporter (TC 2.A.37) family. KefB subfamily. Interacts with the regulatory subunit KefG.

Its subcellular location is the cell inner membrane. In terms of biological role, pore-forming subunit of a potassium efflux system that confers protection against electrophiles. Catalyzes K(+)/H(+) antiport. This chain is Glutathione-regulated potassium-efflux system protein KefB, found in Shigella sonnei (strain Ss046).